Reading from the N-terminus, the 70-residue chain is Turripeptide OL179 (70 aa).

Positions methionine 1–alanine 21 are cleaved as a signal peptide. A propeptide spanning residues serine 22–arginine 32 is cleaved from the precursor.

As to expression, expressed by the venom duct.

It localises to the secreted. Acts as a neurotoxin by inhibiting an ion channel. The sequence is that of Turripeptide OL179 from Iotyrris olangoensis (Sea snail).